The primary structure comprises 166 residues: NAD(P)H-quinone oxidoreductase subunit I, chloroplastic (166 aa).

2 consecutive 4Fe-4S ferredoxin-type domains span residues G55–K84 and L95–E124. Residues C64, C67, C70, C74, C104, C107, C110, and C114 each coordinate [4Fe-4S] cluster.

The protein belongs to the complex I 23 kDa subunit family. In terms of assembly, NDH is composed of at least 16 different subunits, 5 of which are encoded in the nucleus. It depends on [4Fe-4S] cluster as a cofactor.

The protein localises to the plastid. It localises to the chloroplast thylakoid membrane. The catalysed reaction is a plastoquinone + NADH + (n+1) H(+)(in) = a plastoquinol + NAD(+) + n H(+)(out). It catalyses the reaction a plastoquinone + NADPH + (n+1) H(+)(in) = a plastoquinol + NADP(+) + n H(+)(out). Functionally, NDH shuttles electrons from NAD(P)H:plastoquinone, via FMN and iron-sulfur (Fe-S) centers, to quinones in the photosynthetic chain and possibly in a chloroplast respiratory chain. The immediate electron acceptor for the enzyme in this species is believed to be plastoquinone. Couples the redox reaction to proton translocation, and thus conserves the redox energy in a proton gradient. The chain is NAD(P)H-quinone oxidoreductase subunit I, chloroplastic from Sigesbeckia blakei.